The following is a 339-amino-acid chain: Cyclin-Y-like protein 1-A (339 aa).

The segment covering 1-13 has biased composition (polar residues); that stretch reads MGNTVTCCVSPDS. A disordered region spans residues 1–42; that stretch reads MGNTVTCCVSPDSSPKEGRDREVTESGEPYQAQGEPQDGDVQ. Residues 14 to 24 show a composition bias toward basic and acidic residues; that stretch reads SPKEGRDREVT. The region spanning 141 to 263 is the Cyclin N-terminal domain; it reads DIFDEKLHPI…FLELLQFNIN (123 aa).

It belongs to the cyclin family. Cyclin Y subfamily.

The protein is Cyclin-Y-like protein 1-A (ccnyl1-a) of Xenopus laevis (African clawed frog).